The chain runs to 426 residues: 3-phosphoshikimate 1-carboxyvinyltransferase (426 aa).

3-phosphoshikimate contacts are provided by K22, S23, and R27. Position 22 (K22) interacts with phosphoenolpyruvate. G96 and R124 together coordinate phosphoenolpyruvate. Residues S170, S171, Q172, S198, D314, N337, and K341 each contribute to the 3-phosphoshikimate site. A phosphoenolpyruvate-binding site is contributed by Q172. The Proton acceptor role is filled by D314. Positions 345, 387, and 412 each coordinate phosphoenolpyruvate.

It belongs to the EPSP synthase family. As to quaternary structure, monomer.

The protein localises to the cytoplasm. The catalysed reaction is 3-phosphoshikimate + phosphoenolpyruvate = 5-O-(1-carboxyvinyl)-3-phosphoshikimate + phosphate. It participates in metabolic intermediate biosynthesis; chorismate biosynthesis; chorismate from D-erythrose 4-phosphate and phosphoenolpyruvate: step 6/7. Catalyzes the transfer of the enolpyruvyl moiety of phosphoenolpyruvate (PEP) to the 5-hydroxyl of shikimate-3-phosphate (S3P) to produce enolpyruvyl shikimate-3-phosphate and inorganic phosphate. The sequence is that of 3-phosphoshikimate 1-carboxyvinyltransferase from Shewanella loihica (strain ATCC BAA-1088 / PV-4).